The primary structure comprises 433 residues: Epi-neemfruitin B synthase L1AT (433 aa).

Active-site proton acceptor residues include His-151 and Asp-372.

The protein belongs to the plant acyltransferase family. Monomer. Mainly expressed in petioles and, to a lower extent, in roots.

The catalysed reaction is (21S)-21-acetyl-1-hydroxy-apo-melianone + acetyl-CoA = epi-neemfruitin B + acetate + CoA + H(+). It participates in secondary metabolite biosynthesis; terpenoid biosynthesis. Acetyltransferase involved in the biosynthesis of limonoids triterpene natural products such as azadirachtin, an antifeedant widely used as bioinsecticide, and possessing many medicinal applications including anti-tumoral, anti-malarial, anti-rheumatic, antibacterial, anti-inflammatory, anti-pyretic and diuretic effects. Catalyzes the formation of epi-neemfruitin B from (21S)-21-acetyl-1-hydroxy-apo-melianone. This chain is Epi-neemfruitin B synthase L1AT, found in Melia azedarach (Chinaberry tree).